An 805-amino-acid polypeptide reads, in one-letter code: MWDQGGQPWQQWPLNQQQWMQSFQHQQDPSQIDWAALAQAWIAQREASGQQSIVEQPPGMMPNGQDMSAMESGPNNHGNFQGDSNFNRMWQPEWGMHQQPPHPPPEQPWMPPAPGPMDIVPPSEDSNSQDSGEFAPDNRHIFNQNNHNFGGPPDNFAVGPVNQFDYQHGAAFGPPQGGFHPPYWQPGPPGPPAPTQNRRERPPSFRDRQRSPIALPVKQEPPQIDAVKRRTLPAWIREGLEKMEREKQKKLEKERMEQQRSQLSKKEKKATEDAEGGDGPRLPQRSKFDSDEEDEDAENLEAVSSGKVTRSPSPAPQEEHSEPEMTEEEKEYQMMLLTKMLLTEILLDVTDEEIYYVAKDAHRKATKAPAKQLAQSSALASLTGLGGLGGYGSGDSEDERSDRGSESSDTDDEELRHRIRQKQEAFWRKEKEQQLLQDKQIEEEKQQTERVTKEMNEFIHREQNSLSLLEASEADRDAVNDKKRTPNEAPSVLEPKREHKGKEKERGSRSGSSSSGSSSSGSRTSSSSSSVSSSSYSSSSGSSCTSSRSSSPKRRKRPSRSRSPPAKARRSRSRSYSRRVKVDSSRTRGKLRDRRRSNRSSIERERRRNRSPSRDRRRSRSRSRDRRTNRSSRSRSRDRRKIEDPRGNLSGNSHKHKGEAKEQDRKKERSRSVDKDRRKKDKERDRELDKRKEKQKREEKDFKFSSQDDRLKRKRESERTFCRSGSISVKVIRHDSRQDSKKNATKDSKRHSGSDSSGRSSSESPGSSKEKKAKKPKHSRSRSLEKSQRSGKKASRKHKSKSRSR.

Over residues 75-88 (NNHGNFQGDSNFNR) the composition is skewed to polar residues. 2 disordered regions span residues 75–331 (NNHG…EEKE) and 382–805 (LTGL…SRSR). Composition is skewed to pro residues over residues 100–115 (PPHPPPEQPWMPPAPG) and 183–194 (YWQPGPPGPPAP). Residues 197–210 (NRRERPPSFRDRQR) show a composition bias toward basic and acidic residues. Phosphoserine occurs at positions 204 and 211. K218 participates in a covalent cross-link: Glycyl lysine isopeptide (Lys-Gly) (interchain with G-Cter in SUMO2). Positions 237-276 (REGLEKMEREKQKKLEKERMEQQRSQLSKKEKKATEDAEG) form a coiled coil. Residues 238–258 (EGLEKMEREKQKKLEKERMEQ) are compositionally biased toward basic and acidic residues. Residues S290, S304, S313, and S321 each carry the phosphoserine modification. Residues 290 to 299 (SDEEDEDAEN) are compositionally biased toward acidic residues. Over residues 384–393 (GLGGLGGYGS) the composition is skewed to gly residues. The segment covering 421-463 (QKQEAFWRKEKEQQLLQDKQIEEEKQQTERVTKEMNEFIHREQ) has biased composition (basic and acidic residues). Residues 427–461 (WRKEKEQQLLQDKQIEEEKQQTERVTKEMNEFIHR) adopt a coiled-coil conformation. Phosphoserine is present on residues S465 and S467. Basic and acidic residues-rich tracts occupy residues 473–486 (EADRDAVNDKKRTP) and 494–508 (EPKREHKGKEKERGS). Position 485 is a phosphothreonine (T485). A Glycyl lysine isopeptide (Lys-Gly) (interchain with G-Cter in SUMO2) cross-link involves residue K496. Low complexity predominate over residues 509–550 (RSGSSSSGSSSSGSRTSSSSSSVSSSSYSSSSGSSCTSSRSS). 4 stretches are compositionally biased toward basic residues: residues 551–560 (SPKRRKRPSR), 567–579 (KARRSRSRSYSRR), 587–598 (TRGKLRDRRRSN), and 607–639 (RRNRSPSRDRRRSRSRSRDRRTNRSSRSRSRDR). A compositionally biased stretch (basic and acidic residues) spans 659-721 (EAKEQDRKKE…KRKRESERTF (63 aa)). K703 participates in a covalent cross-link: Glycyl lysine isopeptide (Lys-Gly) (interchain with G-Cter in SUMO2). Residue S726 is modified to Phosphoserine. Basic and acidic residues predominate over residues 732–753 (IRHDSRQDSKKNATKDSKRHSG). Positions 754-767 (SDSSGRSSSESPGS) are enriched in low complexity. 2 stretches are compositionally biased toward basic residues: residues 771 to 781 (KKAKKPKHSRS) and 789 to 805 (RSGKKASRKHKSKSRSR).

Belongs to the splicing factor SR family. Interacts with PNN.

It localises to the nucleus speckle. This is Arginine/serine-rich protein PNISR (Pnisr) from Mus musculus (Mouse).